The sequence spans 435 residues: Adenylosuccinate synthetase (435 aa).

GTP is bound by residues 22-28 (GDEGKGK) and 50-52 (GHT). D23 functions as the Proton acceptor in the catalytic mechanism. Mg(2+) contacts are provided by D23 and G50. Residues 23-26 (DEGK), 48-51 (NAGH), T140, R154, Q235, T250, and R314 each bind IMP. The active-site Proton donor is H51. 310–316 (ATTGRKR) contributes to the substrate binding site. GTP contacts are provided by residues R316, 342 to 344 (KLD), and 424 to 426 (SVG).

This sequence belongs to the adenylosuccinate synthetase family. As to quaternary structure, homodimer. Mg(2+) serves as cofactor.

It localises to the cytoplasm. The enzyme catalyses IMP + L-aspartate + GTP = N(6)-(1,2-dicarboxyethyl)-AMP + GDP + phosphate + 2 H(+). Its pathway is purine metabolism; AMP biosynthesis via de novo pathway; AMP from IMP: step 1/2. In terms of biological role, plays an important role in the de novo pathway of purine nucleotide biosynthesis. Catalyzes the first committed step in the biosynthesis of AMP from IMP. This chain is Adenylosuccinate synthetase, found in Chlorobaculum parvum (strain DSM 263 / NCIMB 8327) (Chlorobium vibrioforme subsp. thiosulfatophilum).